We begin with the raw amino-acid sequence, 474 residues long: Cysteine--tRNA ligase (474 aa).

Zn(2+) is bound at residue cysteine 30. A 'HIGH' region motif is present at residues proline 32–asparagine 42. Positions 212, 237, and 241 each coordinate Zn(2+). Positions lysine 270–serine 274 match the 'KMSKS' region motif. Lysine 273 contributes to the ATP binding site.

Belongs to the class-I aminoacyl-tRNA synthetase family. Monomer. It depends on Zn(2+) as a cofactor.

Its subcellular location is the cytoplasm. It carries out the reaction tRNA(Cys) + L-cysteine + ATP = L-cysteinyl-tRNA(Cys) + AMP + diphosphate. In Leptospira borgpetersenii serovar Hardjo-bovis (strain JB197), this protein is Cysteine--tRNA ligase.